Here is a 293-residue protein sequence, read N- to C-terminus: Nitrogenase iron protein (293 aa).

10-17 is an ATP binding site; it reads GKGGIGKS. Residue Cys98 participates in [4Fe-4S] cluster binding. Arg101 is modified (ADP-ribosylarginine; by dinitrogenase reductase ADP-ribosyltransferase). Cys133 provides a ligand contact to [4Fe-4S] cluster.

Belongs to the NifH/BchL/ChlL family. In terms of assembly, homodimer. Requires [4Fe-4S] cluster as cofactor. Post-translationally, the reversible ADP-ribosylation of Arg-101 inactivates the nitrogenase reductase and regulates nitrogenase activity.

The catalysed reaction is N2 + 8 reduced [2Fe-2S]-[ferredoxin] + 16 ATP + 16 H2O = H2 + 8 oxidized [2Fe-2S]-[ferredoxin] + 2 NH4(+) + 16 ADP + 16 phosphate + 6 H(+). In terms of biological role, the key enzymatic reactions in nitrogen fixation are catalyzed by the nitrogenase complex, which has 2 components: the iron protein and the molybdenum-iron protein. The chain is Nitrogenase iron protein from Klebsiella pneumoniae (strain 342).